The following is a 251-amino-acid chain: Adapter protein MecA (251 aa).

Belongs to the MecA family. In terms of assembly, homodimer.

Its function is as follows. Enables the recognition and targeting of unfolded and aggregated proteins to the ClpC protease or to other proteins involved in proteolysis. The polypeptide is Adapter protein MecA (Streptococcus agalactiae serotype Ia (strain ATCC 27591 / A909 / CDC SS700)).